The primary structure comprises 160 residues: Probable cyclic pyranopterin monophosphate synthase (160 aa).

Residues 1-12 show a composition bias toward basic and acidic residues; that stretch reads MSDDSELTHVTD. The tract at residues 1–24 is disordered; the sequence is MSDDSELTHVTDDGDAQMVDVGEK. Residues 78-80 and 114-115 contribute to the substrate site; these read MCH and ME. Residue D129 is part of the active site.

The protein belongs to the MoaC family. In terms of assembly, homohexamer; trimer of dimers.

The catalysed reaction is (8S)-3',8-cyclo-7,8-dihydroguanosine 5'-triphosphate = cyclic pyranopterin phosphate + diphosphate. Its pathway is cofactor biosynthesis; molybdopterin biosynthesis. Functionally, catalyzes the conversion of (8S)-3',8-cyclo-7,8-dihydroguanosine 5'-triphosphate to cyclic pyranopterin monophosphate (cPMP). The sequence is that of Probable cyclic pyranopterin monophosphate synthase from Natronomonas pharaonis (strain ATCC 35678 / DSM 2160 / CIP 103997 / JCM 8858 / NBRC 14720 / NCIMB 2260 / Gabara) (Halobacterium pharaonis).